We begin with the raw amino-acid sequence, 223 residues long: Thiamine-phosphate synthase (223 aa).

Residues 42-46 (QLRDK) and Asn-83 each bind 4-amino-2-methyl-5-(diphosphooxymethyl)pyrimidine. Mg(2+) contacts are provided by Asp-84 and Asp-103. Residue Ser-122 participates in 4-amino-2-methyl-5-(diphosphooxymethyl)pyrimidine binding. 2-[(2R,5Z)-2-carboxy-4-methylthiazol-5(2H)-ylidene]ethyl phosphate is bound at residue 148-150 (TPT). Residue Lys-151 participates in 4-amino-2-methyl-5-(diphosphooxymethyl)pyrimidine binding. Gly-179 lines the 2-[(2R,5Z)-2-carboxy-4-methylthiazol-5(2H)-ylidene]ethyl phosphate pocket.

It belongs to the thiamine-phosphate synthase family. Requires Mg(2+) as cofactor.

It carries out the reaction 2-[(2R,5Z)-2-carboxy-4-methylthiazol-5(2H)-ylidene]ethyl phosphate + 4-amino-2-methyl-5-(diphosphooxymethyl)pyrimidine + 2 H(+) = thiamine phosphate + CO2 + diphosphate. The catalysed reaction is 2-(2-carboxy-4-methylthiazol-5-yl)ethyl phosphate + 4-amino-2-methyl-5-(diphosphooxymethyl)pyrimidine + 2 H(+) = thiamine phosphate + CO2 + diphosphate. It catalyses the reaction 4-methyl-5-(2-phosphooxyethyl)-thiazole + 4-amino-2-methyl-5-(diphosphooxymethyl)pyrimidine + H(+) = thiamine phosphate + diphosphate. Its pathway is cofactor biosynthesis; thiamine diphosphate biosynthesis; thiamine phosphate from 4-amino-2-methyl-5-diphosphomethylpyrimidine and 4-methyl-5-(2-phosphoethyl)-thiazole: step 1/1. Its function is as follows. Condenses 4-methyl-5-(beta-hydroxyethyl)thiazole monophosphate (THZ-P) and 2-methyl-4-amino-5-hydroxymethyl pyrimidine pyrophosphate (HMP-PP) to form thiamine monophosphate (TMP). The protein is Thiamine-phosphate synthase of Mycobacterium avium (strain 104).